A 744-amino-acid chain; its full sequence is Biotin sulfoxide reductase (744 aa).

S121 is a binding site for Mo-bis(molybdopterin guanine dinucleotide).

Belongs to the prokaryotic molybdopterin-containing oxidoreductase family. Requires Mo-bis(molybdopterin guanine dinucleotide) as cofactor.

In terms of biological role, this enzyme may serve as a scavenger, allowing the cell to utilize biotin sulfoxide as a biotin source. It reduces a spontaneous oxidation product of biotin, D-biotin D-sulfoxide (BSO or BDS), back to biotin. This chain is Biotin sulfoxide reductase, found in Cereibacter sphaeroides (Rhodobacter sphaeroides).